A 105-amino-acid chain; its full sequence is Putative pterin-4-alpha-carbinolamine dehydratase (105 aa).

This sequence belongs to the pterin-4-alpha-carbinolamine dehydratase family.

It carries out the reaction (4aS,6R)-4a-hydroxy-L-erythro-5,6,7,8-tetrahydrobiopterin = (6R)-L-erythro-6,7-dihydrobiopterin + H2O. This chain is Putative pterin-4-alpha-carbinolamine dehydratase, found in Sinorhizobium fredii (strain NBRC 101917 / NGR234).